Reading from the N-terminus, the 776-residue chain is Glucocorticoid receptor (776 aa).

3 disordered regions span residues 1–25 (MDPK…YNDK), 47–86 (SCPT…PQPD), and 394–415 (SSPG…STGP). Residues 1-419 (MDPKDLLKPS…STSTGPPPKL (419 aa)) form a modulating region. The segment covering 47–83 (SCPTSTASQSNTRQQQHFQKQLTATGDSTNGLNNNVP) has biased composition (polar residues). Residues 403–413 (SPSPSTSSTST) are compositionally biased toward low complexity. 2 consecutive NR C4-type zinc fingers follow at residues 420–440 (CLVC…CGSC) and 456–480 (CAGR…YRKC). The nuclear receptor DNA-binding region spans 420-485 (CLVCSDEASG…RYRKCLQAGM (66 aa)). Residues 486–522 (NLEARKTKKKIKGIQQSTTATARESPETSMTRTLVPA) form a hinge region. The 235-residue stretch at 523–757 (SVAQLTPTLI…FPDMLSEIIS (235 aa)) folds into the NR LBD domain.

The protein belongs to the nuclear hormone receptor family. NR3 subfamily. As to quaternary structure, heteromultimeric cytoplasmic complex with HSP90. Upon ligand binding the complex undergoes a conformation change and moves to the nucleus, where it dissociates. Binds to DNA as a homodimer, and as heterodimer with NR3C2. Interaction with numerous other transcription factors modulates transcription activation. As to expression, expressed in liver with relative abundance.

It is found in the cytoplasm. The protein localises to the nucleus. It localises to the mitochondrion. Its subcellular location is the cytoskeleton. The protein resides in the spindle. It is found in the microtubule organizing center. The protein localises to the centrosome. In terms of biological role, receptor for glucocorticoids (GC). Has a dual mode of action: as a transcription factor that binds to glucocorticoid response elements (GRE), both for nuclear and mitochondrial DNA, and as a modulator of other transcription factors. Affects inflammatory responses, cellular proliferation and differentiation in target tissues. Involved in chromatin remodeling. Plays a role in rapid mRNA degradation by binding to the 5' UTR of target mRNAs and interacting with PNRC2 in a ligand-dependent manner which recruits the RNA helicase UPF1 and the mRNA-decapping enzyme DCP1A, leading to RNA decay. Could act as a coactivator for STAT5-dependent transcription upon growth hormone (GH) stimulation and could reveal an essential role of hepatic GR in the control of body growth. Mediates glucocorticoid-induced apoptosis. Promotes accurate chromosome segregation during mitosis. May act as a tumor suppressor. May play a negative role in adipogenesis through the regulation of lipolytic and antilipogenic gene expression. The chain is Glucocorticoid receptor (nr3c1) from Xenopus laevis (African clawed frog).